A 165-amino-acid polypeptide reads, in one-letter code: Phosphopantetheine adenylyltransferase (165 aa).

Position 10 (T10) interacts with substrate. Residues 10 to 11 (TF) and H18 contribute to the ATP site. Positions 42, 75, and 89 each coordinate substrate. Residues 90-92 (GLR), E100, and 125-131 (YTYVASS) each bind ATP.

Belongs to the bacterial CoaD family. In terms of assembly, homohexamer. It depends on Mg(2+) as a cofactor.

The protein resides in the cytoplasm. It carries out the reaction (R)-4'-phosphopantetheine + ATP + H(+) = 3'-dephospho-CoA + diphosphate. It functions in the pathway cofactor biosynthesis; coenzyme A biosynthesis; CoA from (R)-pantothenate: step 4/5. In terms of biological role, reversibly transfers an adenylyl group from ATP to 4'-phosphopantetheine, yielding dephospho-CoA (dPCoA) and pyrophosphate. This is Phosphopantetheine adenylyltransferase from Chlorobium phaeobacteroides (strain BS1).